The sequence spans 491 residues: Probable cytosol aminopeptidase (491 aa).

Positions 264 and 269 each coordinate Mn(2+). The active site involves K276. The Mn(2+) site is built by D287, D346, and E348. The active site involves R350.

It belongs to the peptidase M17 family. The cofactor is Mn(2+).

It is found in the cytoplasm. The catalysed reaction is Release of an N-terminal amino acid, Xaa-|-Yaa-, in which Xaa is preferably Leu, but may be other amino acids including Pro although not Arg or Lys, and Yaa may be Pro. Amino acid amides and methyl esters are also readily hydrolyzed, but rates on arylamides are exceedingly low.. The enzyme catalyses Release of an N-terminal amino acid, preferentially leucine, but not glutamic or aspartic acids.. Its function is as follows. Presumably involved in the processing and regular turnover of intracellular proteins. Catalyzes the removal of unsubstituted N-terminal amino acids from various peptides. This Xylella fastidiosa (strain Temecula1 / ATCC 700964) protein is Probable cytosol aminopeptidase.